A 400-amino-acid chain; its full sequence is Plasminogen activator inhibitor 1 (400 aa).

The first 21 residues, 1 to 21 (MQMSTVCLALGLALVFGEASA), serve as a signal peptide directing secretion. N230, N286, and N350 each carry an N-linked (GlcNAc...) asparagine glycan.

It belongs to the serpin family. Forms a heterodimer with TMPRSS7. Interacts with VTN. Binds LRP1B; binding is followed by internalization and degradation. Interacts with PPP1CB. In complex with PLAU/uPA, interacts with PLAUR/uPAR. Interacts with SORL1 and LRP1, either alone or in complex with PLAU; these interactions are abolished in the presence of LRPAP1/RAP. The ternary complex composed of PLAUR-PLAU-PAI1 also interacts with SORL1. Interacts with PLAT/tPA. Also interacts with SORL1, when complexed to PLAT/tPA.

The protein resides in the secreted. Its function is as follows. Serine protease inhibitor. Inhibits TMPRSS7. Is a primary inhibitor of tissue-type plasminogen activator (PLAT) and urokinase-type plasminogen activator (PLAU). As PLAT inhibitor, it is required for fibrinolysis down-regulation and is responsible for the controlled degradation of blood clots. As PLAU inhibitor, it is involved in the regulation of cell adhesion and spreading. Acts as a regulator of cell migration, independently of its role as protease inhibitor. It is required for stimulation of keratinocyte migration during cutaneous injury repair. It is involved in cellular and replicative senescence. Plays a role in alveolar type 2 cells senescence in the lung. Is involved in the regulation of cementogenic differentiation of periodontal ligament stem cells, and regulates odontoblast differentiation and dentin formation during odontogenesis. The polypeptide is Plasminogen activator inhibitor 1 (SERPINE1) (Neovison vison (American mink)).